Consider the following 541-residue polypeptide: Metal transporter Nramp1 (541 aa).

Asparagine 17 carries an N-linked (GlcNAc...) asparagine glycan. 10 helical membrane passes run leucine 45–phenylalanine 65, glutamate 78–alanine 98, phenylalanine 122–glycine 142, isoleucine 153–glutamine 173, leucine 182–alanine 202, glycine 222–leucine 242, glycine 271–valine 291, phenylalanine 315–alanine 335, serine 371–lysine 391, and leucine 392–leucine 412. Asparagine 426 is a glycosylation site (N-linked (GlcNAc...) asparagine). 2 helical membrane passes run isoleucine 430–alanine 450 and valine 465–valine 485. Residue asparagine 511 is glycosylated (N-linked (GlcNAc...) asparagine).

It belongs to the NRAMP (TC 2.A.55) family.

The protein resides in the membrane. Probable divalent metal transporter. The protein is Metal transporter Nramp1 of Populus trichocarpa (Western balsam poplar).